A 621-amino-acid chain; its full sequence is Chaperone protein HtpG (621 aa).

The segment at 1 to 328 (MTQEKKKFDA…SEDLPLNISR (328 aa)) is a; substrate-binding. A b region spans residues 329-544 (ESLQHNSVLE…DSAMDIRMER (216 aa)). A disordered region spans residues 475–495 (SDIDVEQTTSQSEDKNTHSKK). Over residues 486 to 495 (SEDKNTHSKK) the composition is skewed to basic and acidic residues. Positions 545–621 (FLIEQKQITA…LNDIVQKAIL (77 aa)) are c.

It belongs to the heat shock protein 90 family. As to quaternary structure, homodimer.

It is found in the cytoplasm. Its function is as follows. Molecular chaperone. Has ATPase activity. In Rickettsia akari (strain Hartford), this protein is Chaperone protein HtpG.